The sequence spans 616 residues: MDKQAERDQSAGPVKTPQETQPPAHNYTYHTNAAQRAVYDYLKNVKPIPELAEPKTYKTYEEASVEAVLYPIIEKHQVIMVAGAFFGDEGKGKTVNAVANHPGCTFIARVNSGENAGHTVYDDAGRKFVFNLAPSGLLSKGKRNYVGPECVMDPISFMENEVKQLIEANVPYKEQLFIGNVSIVTPYHKLLDLLASAPNSSTLKGMAPIHASKVTKRGIRLDHIFNDQSVLRSRLRKDIDTYFGFLKVKGLSDADVLRRCEKENGDGVVRVPPYVVEFVQAEDKVEYLVKLYMDRVRNNKNFPARCDVAHELRSALSRGEKVMLEGPQSYWLSNAREKFWESTTSADTTASGLLATAQYNFQLYSSVVINVHKAPGSSRVGVGANPSSFVAQDYFSAKGVKTLRDLPENMCVDFDSIQKLFFTKAFHPETKEYNGIWEPLEFEDSTGKYNIGVAMAVASSRHHGECGAVTKKPRVCGFFDCVLQYEVNAVQGPYLSISALDRGDDYDKLGITIAYVYYNGKNNEVLNINGREYKNGDIIKAGEAVPGEAALYYCHPIVKLINGWKQTPIAASKRKPGDPLPRGVCEFLSTVEYFTKAKIISIGNGPRGKDIIYIKQ.

Residues 1-26 (MDKQAERDQSAGPVKTPQETQPPAHN) form a disordered region. A compositionally biased stretch (polar residues) spans 17-26 (PQETQPPAHN). GTP contacts are provided by residues 87-93 (GDEGKGK) and 117-119 (GHT). Asp-88 acts as the Proton acceptor in catalysis. Asp-88 and Gly-117 together coordinate Mg(2+). Residues 88-91 (DEGK), 115-118 (NAGH), Thr-202, Lys-216, Gln-328, Thr-343, and Lys-472 each bind IMP. Residue His-118 is the Proton donor of the active site. Substrate is bound at residue 468 to 474 (AVTKKPR). Residues Arg-474 and 603–605 (GNG) contribute to the GTP site.

It belongs to the adenylosuccinate synthetase family. In terms of assembly, homodimer. Requires Mg(2+) as cofactor.

The protein resides in the cytoplasm. It catalyses the reaction IMP + L-aspartate + GTP = N(6)-(1,2-dicarboxyethyl)-AMP + GDP + phosphate + 2 H(+). The protein operates within purine metabolism; AMP biosynthesis via de novo pathway; AMP from IMP: step 1/2. In terms of biological role, plays an important role in the salvage pathway for purine nucleotide biosynthesis. Catalyzes the first committed step in the biosynthesis of AMP from IMP. This chain is Adenylosuccinate synthetase 2, found in Trypanosoma cruzi (strain CL Brener).